Reading from the N-terminus, the 216-residue chain is ATP-dependent dethiobiotin synthetase BioD (216 aa).

12-17 (GVGKSY) is an ATP binding site. Residue S16 coordinates Mg(2+). The active site involves K37. Residue T41 participates in substrate binding. H53 and E115 together coordinate Mg(2+). 115 to 118 (EGAG) lines the ATP pocket.

This sequence belongs to the dethiobiotin synthetase family. In terms of assembly, homodimer. Mg(2+) serves as cofactor.

The protein localises to the cytoplasm. The enzyme catalyses (7R,8S)-7,8-diammoniononanoate + CO2 + ATP = (4R,5S)-dethiobiotin + ADP + phosphate + 3 H(+). It participates in cofactor biosynthesis; biotin biosynthesis; biotin from 7,8-diaminononanoate: step 1/2. In terms of biological role, catalyzes a mechanistically unusual reaction, the ATP-dependent insertion of CO2 between the N7 and N8 nitrogen atoms of 7,8-diaminopelargonic acid (DAPA, also called 7,8-diammoniononanoate) to form a ureido ring. This is ATP-dependent dethiobiotin synthetase BioD from Wolinella succinogenes (strain ATCC 29543 / DSM 1740 / CCUG 13145 / JCM 31913 / LMG 7466 / NCTC 11488 / FDC 602W) (Vibrio succinogenes).